The chain runs to 78 residues: Probable [Fe-S]-dependent transcriptional repressor (78 aa).

Iron-sulfur cluster-binding residues include cysteine 56, cysteine 61, cysteine 64, and cysteine 70.

It belongs to the FeoC family.

In terms of biological role, may function as a transcriptional regulator that controls feoABC expression. The chain is Probable [Fe-S]-dependent transcriptional repressor from Enterobacter sp. (strain 638).